A 296-amino-acid chain; its full sequence is Tyrosine recombinase XerC (296 aa).

One can recognise a Core-binding (CB) domain in the interval 1–84; that stretch reads MEKIQQAYLY…TLRSFYEYWM (84 aa). A Tyr recombinase domain is found at 105 to 286; that stretch reads YLPHFFYEEE…TNEQLRKVYL (182 aa). Catalysis depends on residues arginine 145, lysine 169, histidine 238, arginine 241, and histidine 264. The active-site O-(3'-phospho-DNA)-tyrosine intermediate is tyrosine 273.

This sequence belongs to the 'phage' integrase family. XerC subfamily. Forms a cyclic heterotetrameric complex composed of two molecules of XerC and two molecules of XerD.

It localises to the cytoplasm. In terms of biological role, site-specific tyrosine recombinase, which acts by catalyzing the cutting and rejoining of the recombining DNA molecules. The XerC-XerD complex is essential to convert dimers of the bacterial chromosome into monomers to permit their segregation at cell division. It also contributes to the segregational stability of plasmids. This is Tyrosine recombinase XerC from Staphylococcus saprophyticus subsp. saprophyticus (strain ATCC 15305 / DSM 20229 / NCIMB 8711 / NCTC 7292 / S-41).